The chain runs to 195 residues: Large ribosomal subunit protein uL5 (195 aa).

Residues Met1–Asn25 are disordered.

This sequence belongs to the universal ribosomal protein uL5 family. Component of the large ribosomal subunit.

The protein localises to the nucleus. It localises to the cytoplasm. Component of the ribosome, a large ribonucleoprotein complex responsible for the synthesis of proteins in the cell. The small ribosomal subunit (SSU) binds messenger RNAs (mRNAs) and translates the encoded message by selecting cognate aminoacyl-transfer RNA (tRNA) molecules. The large subunit (LSU) contains the ribosomal catalytic site termed the peptidyl transferase center (PTC), which catalyzes the formation of peptide bonds, thereby polymerizing the amino acids delivered by tRNAs into a polypeptide chain. The nascent polypeptides leave the ribosome through a tunnel in the LSU and interact with protein factors that function in enzymatic processing, targeting, and the membrane insertion of nascent chains at the exit of the ribosomal tunnel. The polypeptide is Large ribosomal subunit protein uL5 (RpL11) (Spodoptera frugiperda (Fall armyworm)).